The primary structure comprises 176 residues: Ribosome maturation factor RimM (176 aa).

One can recognise a PRC barrel domain in the interval 100 to 173 (PGEFHLLDLL…WLMVCPPPGL (74 aa)).

It belongs to the RimM family. Binds ribosomal protein uS19.

It is found in the cytoplasm. Its function is as follows. An accessory protein needed during the final step in the assembly of 30S ribosomal subunit, possibly for assembly of the head region. Essential for efficient processing of 16S rRNA. May be needed both before and after RbfA during the maturation of 16S rRNA. It has affinity for free ribosomal 30S subunits but not for 70S ribosomes. This is Ribosome maturation factor RimM from Prochlorococcus marinus (strain SARG / CCMP1375 / SS120).